Consider the following 412-residue polypeptide: DNA replication and repair protein RecF (412 aa).

30-37 (GANGAGKT) provides a ligand contact to ATP. The segment at 369–412 (LQVRPGGGTAAVTPDPEYARGEATAANGAASAPTGADAASTSRD) is disordered. Over residues 389 to 412 (GEATAANGAASAPTGADAASTSRD) the composition is skewed to low complexity.

It belongs to the RecF family.

Its subcellular location is the cytoplasm. The RecF protein is involved in DNA metabolism; it is required for DNA replication and normal SOS inducibility. RecF binds preferentially to single-stranded, linear DNA. It also seems to bind ATP. This is DNA replication and repair protein RecF from Salinibacter ruber (strain DSM 13855 / M31).